The primary structure comprises 332 residues: Cytoplasmic phosphatidylinositol transfer protein 1 (332 aa).

A phosphoserine mark is found at Ser119, Ser270, and Ser274. A compositionally biased stretch (low complexity) spans 267–285 (SVRSAPSSAPSTPLSTDAP). Residues 267–332 (SVRSAPSSAP…SDKPCRPKSE (66 aa)) form a disordered region. Phosphothreonine is present on Thr278. Residues 322-332 (SSDKPCRPKSE) show a composition bias toward basic and acidic residues.

The protein belongs to the PtdIns transfer protein family. PI transfer class IIB subfamily. As to expression, ubiquitously expressed.

The protein localises to the cytoplasm. The enzyme catalyses a 1,2-diacyl-sn-glycero-3-phospho-(1D-myo-inositol)(in) = a 1,2-diacyl-sn-glycero-3-phospho-(1D-myo-inositol)(out). It catalyses the reaction a 1,2-diacyl-sn-glycero-3-phosphate(in) = a 1,2-diacyl-sn-glycero-3-phosphate(out). In terms of biological role, catalyzes the transfer of phosphatidylinositol (PI) and phosphatidic acid (PA) between membranes. Binds PA derived from the phospholipase D signaling pathway and among the cellular PA species, preferably binds to the C16:0/16:1 and C16:1/18:1 PA species. Its function is as follows. Catalyzes the transfer of phosphatidylinositol between membranes. The chain is Cytoplasmic phosphatidylinositol transfer protein 1 (PITPNC1) from Homo sapiens (Human).